We begin with the raw amino-acid sequence, 219 residues long: Octanoyltransferase (219 aa).

The region spanning 32 to 207 (ADSGDEIWLL…HLVRQLGYAQ (176 aa)) is the BPL/LPL catalytic domain. Substrate-binding positions include 71–78 (RGGQVTYH), 138–140 (SLG), and 151–153 (GLA). C169 serves as the catalytic Acyl-thioester intermediate.

This sequence belongs to the LipB family.

The protein localises to the cytoplasm. The enzyme catalyses octanoyl-[ACP] + L-lysyl-[protein] = N(6)-octanoyl-L-lysyl-[protein] + holo-[ACP] + H(+). Its pathway is protein modification; protein lipoylation via endogenous pathway; protein N(6)-(lipoyl)lysine from octanoyl-[acyl-carrier-protein]: step 1/2. In terms of biological role, catalyzes the transfer of endogenously produced octanoic acid from octanoyl-acyl-carrier-protein onto the lipoyl domains of lipoate-dependent enzymes. Lipoyl-ACP can also act as a substrate although octanoyl-ACP is likely to be the physiological substrate. This is Octanoyltransferase from Stutzerimonas stutzeri (strain A1501) (Pseudomonas stutzeri).